Consider the following 791-residue polypeptide: Phenylalanine--tRNA ligase beta subunit (791 aa).

Residues Gly-39–Lys-149 form the tRNA-binding domain. Positions Ile-403–Thr-478 constitute a B5 domain. Asp-456, Asp-462, Glu-465, and Glu-466 together coordinate Mg(2+). Residues Pro-698–Arg-791 enclose the FDX-ACB domain.

It belongs to the phenylalanyl-tRNA synthetase beta subunit family. Type 1 subfamily. In terms of assembly, tetramer of two alpha and two beta subunits. It depends on Mg(2+) as a cofactor.

Its subcellular location is the cytoplasm. The catalysed reaction is tRNA(Phe) + L-phenylalanine + ATP = L-phenylalanyl-tRNA(Phe) + AMP + diphosphate + H(+). The polypeptide is Phenylalanine--tRNA ligase beta subunit (Clostridium tetani (strain Massachusetts / E88)).